The primary structure comprises 203 residues: Ribosomal RNA large subunit methyltransferase E (203 aa).

S-adenosyl-L-methionine is bound by residues G59, W61, D79, D97, and D119. K159 (proton acceptor) is an active-site residue.

It belongs to the class I-like SAM-binding methyltransferase superfamily. RNA methyltransferase RlmE family.

Its subcellular location is the cytoplasm. It catalyses the reaction uridine(2552) in 23S rRNA + S-adenosyl-L-methionine = 2'-O-methyluridine(2552) in 23S rRNA + S-adenosyl-L-homocysteine + H(+). Specifically methylates the uridine in position 2552 of 23S rRNA at the 2'-O position of the ribose in the fully assembled 50S ribosomal subunit. This chain is Ribosomal RNA large subunit methyltransferase E, found in Desulforapulum autotrophicum (strain ATCC 43914 / DSM 3382 / VKM B-1955 / HRM2) (Desulfobacterium autotrophicum).